Reading from the N-terminus, the 955-residue chain is B3 domain-containing protein Os07g0563300 (955 aa).

Pro residues-rich tracts occupy residues 1-20 and 29-45; these read MSSP…PPPS and VQPP…PQQP. Disordered stretches follow at residues 1 to 81 and 325 to 392; these read MSSP…QRPR and ARKG…SSSL. The segment covering 62–71 has biased composition (low complexity); the sequence is QHQQQQQGPP. Over residues 332 to 342 the composition is skewed to polar residues; it reads DPCSSVSTTFK. Basic and acidic residues predominate over residues 343-355; the sequence is LDSHHPSILKDDP. The segment covering 382 to 392 has biased composition (low complexity); it reads QQQQQMASSSL. The segment at residues 453 to 554 is a DNA-binding region (TF-B3); sequence FEKMLSASDA…KLVMGFRKAT (102 aa). Composition is skewed to polar residues over residues 556-565 and 598-608; these read LSAEQDQPTK and NTESKSSSPVE. The tract at residues 556 to 642 is disordered; the sequence is LSAEQDQPTK…PLPVKRKATS (87 aa). A CW-type zinc finger spans residues 708 to 758; the sequence is SGENHQWAQCEDCSKWRKLPVDALLPSKWTCSDNKWDSERSSCDSAQEINM. Residues Cys-717, Cys-720, Cys-738, and Cys-750 each coordinate Zn(2+). Residues 856–955 are disordered; sequence MMRREKRQQS…ATRLLRDNPT (100 aa). Basic and acidic residues predominate over residues 862-877; that stretch reads RQQSEKDSGVPRKREP. Polar residues-rich tracts occupy residues 878–900 and 920–933; these read GQSS…SSPH and TSSP…LNSQ. Positions 939 to 955 are enriched in basic and acidic residues; that stretch reads EQSPKSDATRLLRDNPT.

It localises to the nucleus. The protein is B3 domain-containing protein Os07g0563300 of Oryza sativa subsp. japonica (Rice).